Reading from the N-terminus, the 360-residue chain is 3-dehydroquinate synthase (360 aa).

Residues 71–76, 105–109, 129–130, Lys-142, Lys-151, and 169–172 each bind NAD(+); these read DGEQFK, GVIGD, TT, and FLKT. Positions 184, 247, and 264 each coordinate Zn(2+).

Belongs to the sugar phosphate cyclases superfamily. Dehydroquinate synthase family. NAD(+) serves as cofactor. Co(2+) is required as a cofactor. It depends on Zn(2+) as a cofactor.

The protein resides in the cytoplasm. It carries out the reaction 7-phospho-2-dehydro-3-deoxy-D-arabino-heptonate = 3-dehydroquinate + phosphate. It participates in metabolic intermediate biosynthesis; chorismate biosynthesis; chorismate from D-erythrose 4-phosphate and phosphoenolpyruvate: step 2/7. Catalyzes the conversion of 3-deoxy-D-arabino-heptulosonate 7-phosphate (DAHP) to dehydroquinate (DHQ). The polypeptide is 3-dehydroquinate synthase (Buchnera aphidicola subsp. Schizaphis graminum (strain Sg)).